A 744-amino-acid chain; its full sequence is Zinc finger protein 483 (744 aa).

In terms of domain architecture, SCAN box spans 52 to 134 (RQRFRWFCYS…TLIEDLTQML (83 aa)). Positions 137-156 (KDPVSQDSTVSQEENSKEDK) are disordered. One can recognise a KRAB domain in the interval 170–241 (ITLKDVAVNF…EEVSKSSRLD (72 aa)). 2 disordered regions span residues 263 to 308 (ESQQ…SPFG) and 350 to 385 (KEKTAGEKSRKSNDGGKVLSHSSALTEHQKRQKIHL). Over residues 277 to 293 (NQGNSKGRVAQNKTLGS) the composition is skewed to polar residues. Basic and acidic residues-rich tracts occupy residues 298-308 (KKFDPDKSPFG) and 350-363 (KEKTAGEKSRKSND). C2H2-type zinc fingers lie at residues 439-461 (HKCSKCGKAFGYSASLTKHRRIH), 467-489 (YMCNECGKAFSDSSSLTPHHRTH), 495-517 (FKCDDCGKGFTLSAHLIKHQRIH), 523-545 (YKCKDCGRPFSDSSSLIQHQRIH), 551-573 (YTCSNCGKSFSHSSSLSKHQRIH), 579-601 (YKCGECGKAFRQNSCLTRHQRIH), 607-629 (YLCNDCGMTFSHFTSVIYHQRLH), 635-657 (YKCNQCEKAFPTHSLLSRHQRIH), 663-685 (YKCKECGKSFSQSSSLNEHHRIH), 691-713 (YECNYCGATFSRSSILVEHLKIH), and 719-741 (YECNECEKTFKSNSGLIRHRGFH).

The protein belongs to the krueppel C2H2-type zinc-finger protein family.

It is found in the nucleus. May be involved in transcriptional regulation. This is Zinc finger protein 483 (ZNF483) from Homo sapiens (Human).